The following is an 85-amino-acid chain: U4-theraphotoxin-Hhn1l (85 aa).

The first 22 residues, 1-22 (MKVTLIAFLTCAAVLVLHTTAA), serve as a signal peptide directing secretion. A propeptide spanning residues 23–48 (EELEAESQLMGVGMPDTELAAVDEER) is cleaved from the precursor. Cystine bridges form between cysteine 52/cysteine 66, cysteine 56/cysteine 77, and cysteine 71/cysteine 82.

This sequence belongs to the neurotoxin 12 (Hwtx-2) family. 02 (Hwtx-2) subfamily. Expressed by the venom gland.

Its subcellular location is the secreted. In terms of biological role, postsynaptic neurotoxin. This is U4-theraphotoxin-Hhn1l from Cyriopagopus hainanus (Chinese bird spider).